Reading from the N-terminus, the 499-residue chain is BTB/POZ domain-containing protein At5g60050 (499 aa).

A compositionally biased stretch (low complexity) spans 18–30 (PSLSFSPSRISSP). The tract at residues 18-57 (PSLSFSPSRISSPIKLSTASPPLPPPPPPPPNESTLSNPT) is disordered. Pro residues predominate over residues 38–49 (PPLPPPPPPPPN). Positions 99–172 (GDVKLTVVGK…MYSDDLKKKL (74 aa)) constitute a BTB domain.

It functions in the pathway protein modification; protein ubiquitination. In terms of biological role, may act as a substrate-specific adapter of an E3 ubiquitin-protein ligase complex (CUL3-RBX1-BTB) which mediates the ubiquitination and subsequent proteasomal degradation of target proteins. The sequence is that of BTB/POZ domain-containing protein At5g60050 from Arabidopsis thaliana (Mouse-ear cress).